A 55-amino-acid chain; its full sequence is ATP synthase F(0) complex subunit 8 (55 aa).

The chain crosses the membrane as a helical span at residues 4–24; sequence LLPTPWFTIFIYAWMVLLAVI.

It belongs to the ATPase protein 8 family. In terms of assembly, component of the ATP synthase complex composed at least of ATP5F1A/subunit alpha, ATP5F1B/subunit beta, ATP5MC1/subunit c (homooctomer), MT-ATP6/subunit a, MT-ATP8/subunit 8, ATP5ME/subunit e, ATP5MF/subunit f, ATP5MG/subunit g, ATP5MK/subunit k, ATP5MJ/subunit j, ATP5F1C/subunit gamma, ATP5F1D/subunit delta, ATP5F1E/subunit epsilon, ATP5PF/subunit F6, ATP5PB/subunit b, ATP5PD/subunit d, ATP5PO/subunit OSCP. ATP synthase complex consists of a soluble F(1) head domain (subunits alpha(3) and beta(3)) - the catalytic core - and a membrane F(0) domain - the membrane proton channel (subunits c, a, 8, e, f, g, k and j). These two domains are linked by a central stalk (subunits gamma, delta, and epsilon) rotating inside the F1 region and a stationary peripheral stalk (subunits F6, b, d, and OSCP).

The protein localises to the mitochondrion membrane. Its function is as follows. Subunit 8, of the mitochondrial membrane ATP synthase complex (F(1)F(0) ATP synthase or Complex V) that produces ATP from ADP in the presence of a proton gradient across the membrane which is generated by electron transport complexes of the respiratory chain. ATP synthase complex consist of a soluble F(1) head domain - the catalytic core - and a membrane F(1) domain - the membrane proton channel. These two domains are linked by a central stalk rotating inside the F(1) region and a stationary peripheral stalk. During catalysis, ATP synthesis in the catalytic domain of F(1) is coupled via a rotary mechanism of the central stalk subunits to proton translocation. In vivo, can only synthesize ATP although its ATP hydrolase activity can be activated artificially in vitro. Part of the complex F(0) domain. The chain is ATP synthase F(0) complex subunit 8 from Dicentrarchus labrax (European seabass).